A 1052-amino-acid chain; its full sequence is MSTWSSMLADLKKRAEEAKRQAKKGYDVTKNGLQYGVSQAKLQALAAGKAVQKYGNKLVLVIPKEYDGSVGNGFFDLVKAAEELGIQVKYVNRNELEVAHKSLGTADQFLGLTERGLTLFAPQLDQFLQKHSKISNVVGSSTGDAVSKLAKSQTIISGIQSVLGTVLAGINLNEAIISGGSELELAEAGVSLASELVSNIAKGTTTIDAFTTQIQNFGKLVENAKGLGGVGRQLQNISGSALSKTGLGLDIISSLLSGVTASFALANKNASTSTKVAAGFELSNQVIGGITKAVSSYILAQRLAAGLSTTGPAAALIASSISLAISPLAFLRVADNFNRSKEIGEFAERFKKLGYDGDKLLSEFYHEAGTIDASITTISTALSAIAAGTAAASAGALVGAPITLLVTGITGLISGILEFSKQPMLDHVASKIGNKIDEWEKKYGKNYFENGYDARHKAFLEDSFSLLSSFNKQYETERAVLITQQRWDEYIGELAGITGKGDKLSSGKAYVDYFQEGKLLEKKPDDFSKVVFDPTKGEIDISNSQTSTLLKFVTPLLTPGTESRERTQTGKYEYITKLVVKGKDKWVVNGVKDKGAVYDYTNLIQHAHISSSVARGEEYREVRLVSHLGNGNDKVFLAAGSAEIHAGEGHDVVYYDKTDTGLLVIDGTKATEQGRYSVTRELSGATKILREVIKNQKSAVGKREETLEYRDYELTQSGNSNLKAHDELHSVEEIIGSNQRDEFKGSKFRDIFHGADGDDLLNGNDGDDILYGDKGNDELRGDNGNDQLYGGEGNDKLLGGNGNNYLSGGDGNDELQVLGNGFNVLRGGKGDDKLYGSSGSDLLDGGEGNDYLEGGDGSDFYVYRSTSGNHTIYDQGKSSDLDKLYLSDFSFDRLLVEKVDDNLVLRSNESSHNNGVLTIKDWFKEGNKYNHKIEQIVDKNGRKLTAENLGTYFKNAPKADNLLNYATKEDQNESNLSSLKTELSKIITNAGNFGVAKQGNTGINTAALNNEVNKIISSANTFATSQLGGSGMGTLPSTNVNSMMLGNLARAA.

3 consecutive transmembrane segments (helical) span residues 248–265 (GLDI…SFAL), 275–334 (KVAA…LRVA), and 372–418 (DASI…GILE). 6 Hemolysin-type calcium-binding repeats span residues 744-761 (KGSK…DDLL), 762-779 (NGND…NDEL), 780-797 (RGDN…NDKL), 798-815 (LGGN…NDEL), 826-843 (RGGK…SDLL), and 844-861 (DGGE…SDFY).

The protein belongs to the RTX prokaryotic toxin (TC 1.C.11) family. Palmitoylated by ApxIIIC. The toxin only becomes active when modified.

Its subcellular location is the secreted. The protein resides in the host cell membrane. Does not have hemolytic activity but shows a strong cytotoxicity towards alveolar macrophages and neutrophils. In Actinobacillus pleuropneumoniae (Haemophilus pleuropneumoniae), this protein is RTX-III toxin determinant A from serotype 8 (apxIIIA).